Reading from the N-terminus, the 267-residue chain is NLP effector protein 6 (267 aa).

A signal peptide spans 1-35 (MRTTSPYSHCSHVEMNAGAFVTMLLVALSVCVAAA). N-linked (GlcNAc...) asparagine glycosylation occurs at N114. Positions 117-127 (AIMYAWYFPKR) match the Conserved undecapeptide motif motif. The short motif at 134–140 (IQRHDWK) is the Conserved heptapeptide motif element. N-linked (GlcNAc...) asparagine glycosylation occurs at N192.

The protein belongs to the Necrosis inducing protein (NPP1) family.

It localises to the secreted. In terms of biological role, probable secreted effector that may act as a pathogen-associated molecular pattern (PAMP) recognized by the plant immune system. The protein is NLP effector protein 6 of Plasmopara viticola (Downy mildew of grapevine).